Here is a 145-residue protein sequence, read N- to C-terminus: Putative nickel-responsive regulator (145 aa).

Ni(2+)-binding residues include histidine 77, histidine 88, histidine 90, and cysteine 96.

This sequence belongs to the transcriptional regulatory CopG/NikR family. Ni(2+) is required as a cofactor.

Transcriptional regulator. In Rhizobium rhizogenes (strain K84 / ATCC BAA-868) (Agrobacterium radiobacter), this protein is Putative nickel-responsive regulator.